The chain runs to 63 residues: Insect toxin TbIT-1 (63 aa).

The LCN-type CS-alpha/beta domain maps to 2 to 63 (KEGYPVDSRG…VYDNASNKCB (62 aa)). Intrachain disulfides connect C12-C62, C16-C38, C24-C43, and C28-C45.

Belongs to the long (4 C-C) scorpion toxin superfamily. Sodium channel inhibitor family. Beta subfamily. As to expression, expressed by the venom gland.

The protein resides in the secreted. Beta toxins bind voltage-independently at site-4 of sodium channels (Nav) and shift the voltage of activation toward more negative potentials thereby affecting sodium channel activation and promoting spontaneous and repetitive firing. This toxin is only active against insects. The sequence is that of Insect toxin TbIT-1 from Tityus bahiensis (Brazilian scorpion).